A 406-amino-acid chain; its full sequence is Endoplasmic reticulum resident protein 44 (406 aa).

Positions 1 to 29 (MNPAVFLSLADLRCSLLLLVTSIFTPITA) are cleaved as a signal peptide. In terms of domain architecture, Thioredoxin spans 30–138 (EIASLDSENI…VKALADYIRQ (109 aa)). Disulfide bonds link cysteine 189–cysteine 241 and cysteine 301–cysteine 318. The segment at 236-285 (WIQDKCVPLVREITFENGEELTEEGLPFLILFHMKDDTESLEIFQNEVAR) is interaction with ITPR1. Residues 360–387 (FHHGPDPTDTAPGEQDQDVASSPPESSF) are disordered. The segment covering 377-387 (DVASSPPESSF) has biased composition (polar residues). A Prevents secretion from ER motif is present at residues 403–406 (RDEL).

In terms of assembly, forms mixed disulfides with both ERO1A and ERO1B and cargo folding intermediates; the interactions with ERO1A and ERO1B result in their retention in the endoplasmic reticulum. Directly interacts with ITPR1 in a pH-, redox state- and calcium-dependent manner, but not with ITPR2 or ITPR3. The strength of this interaction inversely correlates with calcium concentration. Widely expressed.

It is found in the endoplasmic reticulum lumen. Its function is as follows. Mediates thiol-dependent retention in the early secretory pathway, forming mixed disulfides with substrate proteins through its conserved CRFS motif. Inhibits the calcium channel activity of ITPR1. May have a role in the control of oxidative protein folding in the endoplasmic reticulum. Required to retain ERO1A and ERO1B in the endoplasmic reticulum. In Mus musculus (Mouse), this protein is Endoplasmic reticulum resident protein 44 (Erp44).